We begin with the raw amino-acid sequence, 125 residues long: Histone H1-like protein Hc1 (125 aa).

Positions 98-125 are disordered; the sequence is TKAKVKPTKKAAPKTKVKTAKKTRSTKK. Basic residues predominate over residues 100–125; it reads AKVKPTKKAAPKTKVKTAKKTRSTKK.

It belongs to the histone H1/H5 family. HCT subfamily.

Its function is as follows. Might have a role analogous to that of eukaryotic histone proteins. In Chlamydia trachomatis serovar D (strain ATCC VR-885 / DSM 19411 / UW-3/Cx), this protein is Histone H1-like protein Hc1 (hctA).